The primary structure comprises 173 residues: Calmodulin-like protein 11 (173 aa).

The segment covering 1 to 26 has biased composition (low complexity); that stretch reads MEEIQQQQQQQQQQQQQQQQQQQQQQ. The tract at residues 1-27 is disordered; that stretch reads MEEIQQQQQQQQQQQQQQQQQQQQQQE. 4 consecutive EF-hand domains span residues 31 to 66, 67 to 102, 104 to 139, and 140 to 173; these read EQIM…LDQN, PTEQ…QLQE, DADE…LGEK, and LTDE…MING. Ca(2+) is bound by residues Asp-44, Asp-46, Asp-48, Cys-50, Glu-55, Asp-80, Asp-82, Asn-84, Thr-86, Glu-91, Asp-117, Asp-119, Asn-121, Tyr-123, Glu-128, Asp-153, Asp-155, Asp-157, Gln-159, and Glu-164.

It belongs to the calmodulin family.

In terms of biological role, potential calcium sensor. In Arabidopsis thaliana (Mouse-ear cress), this protein is Calmodulin-like protein 11 (CML11).